Reading from the N-terminus, the 176-residue chain is V-type proton ATPase 16 kDa proteolipid subunit (176 aa).

The Lumenal portion of the chain corresponds to M1–P17. A helical membrane pass occupies residues F18–G38. The Cytoplasmic portion of the chain corresponds to T39–F62. Residues P63–I83 traverse the membrane as a helical segment. Residues N84–D98 are Lumenal-facing. A helical membrane pass occupies residues L99–S119. The Cytoplasmic segment spans residues G120–S136. The helical transmembrane segment at M137–I157 threads the bilayer. Topologically, residues M158–S176 are lumenal.

The protein belongs to the V-ATPase proteolipid subunit family. In terms of assembly, V-ATPase is a heteromultimeric enzyme composed of a peripheral catalytic V1 complex (main components: subunits A, B, C, D, E, and F) attached to an integral membrane V0 proton pore complex (main component: the proteolipid protein; which is present as a hexamer that forms the proton-conducting pore).

It is found in the vacuole membrane. Its function is as follows. Proton-conducting pore forming subunit of the membrane integral V0 complex of vacuolar ATPase. V-ATPase is responsible for acidifying a variety of intracellular compartments in eukaryotic cells. This chain is V-type proton ATPase 16 kDa proteolipid subunit (VMA3), found in Entamoeba dispar.